A 1696-amino-acid polypeptide reads, in one-letter code: MEPAAAAPAQRLADPTGEDRAPAAAAAAEGGRSPDSVLSAAAPSGGNGGAAREEAPCEAPPGPLPGRAGGTGRRRRRGVPQPAAGGAAPVTAAGGGANSLLLRRGRLKRNLSAAASSSSSPSSASSAAGGLPASCSASASLCTRSLDRKTLLQKHRQLLQLQPSDRDWVRHQLQRGCVHVFDRHMASSYLRPVLCTLDTTAAEVAARLLQLGHKGGGVVKVLGHGPPPAAAPAASDQTPATELGRDVEPPPSSSTVGAVRGPARAPPADLPLPGGAWTRCAPRVNPAPSDSSPGELFAGGPCSPSRAPRPASDTESFSLSPSAESVSDRLDPYSSGGGSSSSSEELEADPATVLTGPSGPPHHPVRSSQPRPPSPKTSALLQPKAPTGVDGTGLVVGEGPGDDKAVAAAAPGVPLWTPGRIRETVQKTSSPPSLYVQLHGETTRRLEADEKPLQIQNDYLFQLGFGELWRVQEEGMDSEIGCLIRFYAGKPHSTGSSERIQLSGMYNVRKGKMQLPVNRWTRRQVILCGTCLIVSSVKDSSSGKMHVLPLIGGKVEEVKKHQHCLAFSSSGPQSQTYYICFDTFTEYLRWLRQVSKVASQRISSVDLSCCSLEHLPANLFYSQDLTHLNLKQNFLRQNPSLPAARGLGELQRFTKLKSLNLSNNHLGAFPSAVCSIPTLAELNVSCNALQEVPAAVGAMQNLQTFLLDGNFLQSLPAELENMHQLSYLGLSFNEFTDIPEVLEKLTAVDKLCMAGNCMETLRLQALRRMPHIKHVDLRLNILRKLITDEVDFLQHVTQLDLRDNKLGDLDAMIFNNIEVLHCERNQLVTLNICGYFLKALYASSNELVQLDVYPVPNYLSYMDVSRNCLESVPEWVCESRKLEVLDIGHNQICELPARLFCNSSLRKLLAGHNRLARLPERLERTSVEVLDVQHNQIIELPPNLLMKADSLRFLNASANKLETLPPATLSEETSSILQELYLTNNSLTDKCVPLLTGHPRLKILHMAYNRLQSFPASKMAKLEELEEIDISGNKLKAIPTTIMNCRRMHTVIAHSNCIEVFPEVMQLPEVKCVDLSCNELSEITLPENLPPKLQELDLTGNPRLALDHKSLELLNNIRCFKIDQPSAGDASGAPAVWSHGYTEASGVKNKLCVAALSVNNFRDNREALYGVFDGDRNVEVPYLLQCTMSDILAEELQKTKNEEEYMVNTFIVMQRKLGTAGQKLGGAAVLCHIRHDPVDLGGSFTLTSANVGKCQTVLCRNGKPLSLSRSYTMSCEEERKRIKQHKAIITEDGKVNGVTESTRILGYTFLHPSVVPRPHVQSVLLTPQDEFFILGSKGLWDSLSIEEAVEAVRNVPDALAAAKKLCTLAQSYGCHDSISAVVVQLSVTEDSFCCCELSVGGSMPPPSPGIFPPSVSMVIKDRPSDGLGVPSSSSGMASEISSELSTSEMSSEVGSTASDEPPSGALSESSPAYPSEQRCMLHPVCLSNSFQRQLSSATFSSAFSDNGLDSDDEEPIEGVFSNGSRVEVEVDIHCSRAKEKERQQHLLQVPAEASDEGIVISANEDESGLSKKTDISAVGTIGRRRANGSVPPQERSHNVIEVATDAPLRKPGGYFAAPAQPDPDDQFIIPPELEEEVKEIMKHHQEQQQQQQQQQQQQQQQPPPPPQPPQAQAQAQAQAQRPFQMDHLPDCYDTPL.

Met-1 carries the post-translational modification N-acetylmethionine. Disordered regions lie at residues 1 to 97 (MEPA…GGGA) and 222 to 398 (LGHG…VVGE). Residues 79–92 (VPQPAAGGAAPVTA) are compositionally biased toward low complexity. Residues 313-325 (DTESFSLSPSAES) are compositionally biased toward polar residues. Ser-378 is subject to Phosphoserine. In terms of domain architecture, PH spans 499–599 (RIQLSGMYNV…WLRQVSKVAS (101 aa)). LRR repeat units lie at residues 601–622 (RISSVDLSCCSLEHLPANLFYS), 624–645 (DLTHLNLKQNFLRQNPSLPAAR), 655–676 (KLKSLNLSNNHLGAFPSAVCSI), 678–699 (TLAELNVSCNALQEVPAAVGAM), 701–722 (NLQTFLLDGNFLQSLPAELENM), 724–746 (QLSYLGLSFNEFTDIPEVLEKLT), 836–857 (FLKALYASSNELVQLDVYPVPN), 858–879 (YLSYMDVSRNCLESVPEWVCES), 881–902 (KLEVLDIGHNQICELPARLFCN), 904–925 (SLRKLLAGHNRLARLPERLERT), 926–947 (SVEVLDVQHNQIIELPPNLLMK), 950–971 (SLRFLNASANKLETLPPATLSE), 976–996 (ILQELYLTNNSLTDKCVPLLT), 1000–1021 (RLKILHMAYNRLQSFPASKMAK), 1024–1045 (ELEEIDISGNKLKAIPTTIMNC), 1047–1068 (RMHTVIAHSNCIEVFPEVMQLP), 1069–1090 (EVKCVDLSCNELSEITLPENLP), and 1092–1113 (KLQELDLTGNPRLALDHKSLEL). The 248-residue stretch at 1138–1385 (SHGYTEASGV…DSISAVVVQL (248 aa)) folds into the PPM-type phosphatase domain. Residues Asp-1173, Gly-1174, Lys-1337, and Asp-1376 each coordinate Mn(2+). Disordered stretches follow at residues 1422 to 1473 (RPSD…SPAY) and 1610 to 1696 (KPGG…DTPL). Composition is skewed to low complexity over residues 1431-1452 (SSSSGMASEISSELSTSEMSSE), 1647-1660 (QQQQQQQQQQQQQQ), and 1670-1680 (QAQAQAQAQAQ). Residues 1694 to 1696 (TPL) carry the PDZ-binding motif.

Interacts with the nucleotide free form of K-Ras (KRAS) via its LRR repeats. Interacts with AKT2, AKT3 and PRKCB isoform beta-II. Interacts with WDR48 and USP12. Requires Mn(2+) as cofactor. Mainly present in brain (at protein level). Isoform 2 is more abundant in adult brain neurons than isoform 1 in. Isoforms 1 and 2 are expressed in the retina but not found in rod outer segments.

The protein resides in the cytoplasm. Its subcellular location is the membrane. It is found in the cell membrane. The protein localises to the nucleus. It localises to the nucleoplasm. The protein resides in the nucleus membrane. It catalyses the reaction O-phospho-L-seryl-[protein] + H2O = L-seryl-[protein] + phosphate. The catalysed reaction is O-phospho-L-threonyl-[protein] + H2O = L-threonyl-[protein] + phosphate. Its activity is regulated as follows. Insensitive to okadaic acid. Deubiquitination by WDR48-USP12 complex positively regulates PHLPP1 stability. Functionally, protein phosphatase involved in regulation of Akt and PKC signaling. Mediates dephosphorylation in the C-terminal domain hydrophobic motif of members of the AGC Ser/Thr protein kinase family; specifically acts on 'Ser-473' of AKT2 and AKT3, 'Ser-660' of PRKCB and 'Ser-657' of PRKCA. Isoform 2 seems to have a major role in regulating Akt signaling in hippocampal neurons while isoform 1 may promote Akt and PKC activation and inhibit ERK signaling. Akt regulates the balance between cell survival and apoptosis through a cascade that primarily alters the function of transcription factors that regulate pro- and antiapoptotic genes. Dephosphorylation of 'Ser-473' of Akt triggers apoptosis and suppression of tumor growth. Dephosphorylation of PRKCA and PRKCB leads to their destabilization and degradation. Dephosphorylates STK4 on 'Thr-387' leading to STK4 activation and apoptosis. Dephosphorylates RPS6KB1 and is involved in regulation of cap-dependent translation. Inhibits cancer cell proliferation and may act as a tumor suppressor. Dephosphorylates RAF1 inhibiting its kinase activity. May act as a negative regulator of K-Ras signaling in membrane rafts. Involved in the hippocampus-dependent long-term memory formation. Involved in circadian control by regulating the consolidation of circadian periodicity after resetting. Involved in development and function of regulatory T-cells. The sequence is that of PH domain leucine-rich repeat protein phosphatase 1 (Phlpp1) from Rattus norvegicus (Rat).